The sequence spans 131 residues: Photosystem II reaction center Psb28 protein (131 aa).

The interval 110–131 is disordered; the sequence is NGLGYSQNQKSDQTDAATEEQA. Residues 112–125 are compositionally biased toward polar residues; that stretch reads LGYSQNQKSDQTDA.

It belongs to the Psb28 family. As to quaternary structure, part of the photosystem II complex.

It localises to the cellular thylakoid membrane. This Synechococcus sp. (strain CC9902) protein is Photosystem II reaction center Psb28 protein.